Consider the following 465-residue polypeptide: D-ornithine/D-lysine decarboxylase (465 aa).

The residue at position 80 (Lys80) is an N6-(pyridoxal phosphate)lysine. Residues Gly259 and 307–310 (EPGR) each bind pyridoxal 5'-phosphate. The active-site Proton donor is Cys387. Tyr422 is a binding site for pyridoxal 5'-phosphate.

This sequence belongs to the Orn/Lys/Arg decarboxylase class-II family. In terms of assembly, homodimer. Pyridoxal 5'-phosphate is required as a cofactor.

The enzyme catalyses D-ornithine + H(+) = putrescine + CO2. It carries out the reaction D-lysine + H(+) = cadaverine + CO2. In terms of biological role, catalyzes the decarboxylation of D-ornithine and D-lysine. Ornithine is likely the physiological substrate. Has no detectable diaminopimelate decarboxylase activity in vitro. The sequence is that of D-ornithine/D-lysine decarboxylase from Salmonella typhimurium (strain LT2 / SGSC1412 / ATCC 700720).